A 164-amino-acid polypeptide reads, in one-letter code: UPF0561 protein C2orf68 homolog (164 aa).

Basic and acidic residues-rich tracts occupy residues 1–13 (MEVI…ESVK) and 35–49 (IARD…QAKE). The disordered stretch occupies residues 1–98 (MEVIRDGEGE…WNESSSGTEM (98 aa)). A compositionally biased stretch (basic residues) spans 50–64 (KQRRRHTNTPRRPRR).

This sequence belongs to the UPF0561 family.

The chain is UPF0561 protein C2orf68 homolog from Danio rerio (Zebrafish).